A 1182-amino-acid chain; its full sequence is Phosphatidylinositol 3-kinase age-1 (1182 aa).

Positions 1–16 are enriched in polar residues; that stretch reads MSMGRSPSTTFRSRTG. Residues 1-24 form a disordered region; the sequence is MSMGRSPSTTFRSRTGSHGARDLI. The PI3K-ABD domain maps to 74-174; that stretch reads NEGVADIITM…FPMLFLYQPD (101 aa). Positions 266–358 constitute a PI3K-RBD domain; sequence KRKAEINGVC…YRCPGFVVRR (93 aa). Residues 425 to 577 enclose the C2 PI3K-type domain; it reads LDANLMIRPV…SSYGGRVRMP (153 aa). In terms of domain architecture, PIK helical spans 601 to 788; it reads DDYESCIRDP…SLLMEAYLRG (188 aa). One can recognise a PI3K/PI4K catalytic domain in the interval 853 to 1168; sequence IIDKAIVLGS…IYEEAFNGSW (316 aa). A G-loop region spans residues 859 to 865; the sequence is VLGSAKR. Residues 1028–1036 form a catalytic loop region; it reads GIKDRHSDN. Positions 1047 to 1073 are activation loop; it reads HIDFGHILGHGKTKLGIQRDRQPFILT.

The protein belongs to the PI3/PI4-kinase family.

It carries out the reaction a 1,2-diacyl-sn-glycero-3-phospho-(1D-myo-inositol) + ATP = a 1,2-diacyl-sn-glycero-3-phospho-(1D-myo-inositol-3-phosphate) + ADP + H(+). In terms of biological role, phosphatidylinositol 3-kinase homolog that regulates longevity and diapause. Promotes cell survival during embryonic development by recruiting akt-1/2 to the plasma membrane through the production of PtdIns(3,4,5)P3. Could function in the development or neuroendocrine signaling of the dauer pathway. Mediates susceptibility to enteropathogenic E.coli infection. May negatively regulate AYI interneuron neurite outgrowth. Plays a role in aversive olfactory learning when an odor is associated with food deprivation. Regulates this process by promoting the nuclear relocalization of egl-4 in AWC olfactory neurons after odor conditioning. The chain is Phosphatidylinositol 3-kinase age-1 from Caenorhabditis elegans.